The following is a 225-amino-acid chain: Small ribosomal subunit protein eS1 (225 aa).

Residues 206–216 show a composition bias toward acidic residues; the sequence is PVEEPAAEEVA. Positions 206-225 are disordered; that stretch reads PVEEPAAEEVAEAPAAETQE.

It belongs to the eukaryotic ribosomal protein eS1 family.

The sequence is that of Small ribosomal subunit protein eS1 from Methanococcus maripaludis (strain C5 / ATCC BAA-1333).